The chain runs to 56 residues: Large ribosomal subunit protein bL32 (56 aa).

A disordered region spans residues 1-37 (MAVQQNKKSRSRRDMRRSHDALTTAAVSVDKASGETH). Positions 7–16 (KKSRSRRDMR) are enriched in basic residues.

This sequence belongs to the bacterial ribosomal protein bL32 family.

The polypeptide is Large ribosomal subunit protein bL32 (Haemophilus influenzae (strain PittEE)).